The chain runs to 263 residues: Endonuclease 8 (263 aa).

The active-site Schiff-base intermediate with DNA is Pro-2. Catalysis depends on Glu-3, which acts as the Proton donor. Lys-53 serves as the catalytic Proton donor; for beta-elimination activity. The DNA site is built by Gln-70, Arg-125, and Asn-169. An FPG-type zinc finger spans residues Lys-229–His-263. Catalysis depends on Arg-253, which acts as the Proton donor; for delta-elimination activity.

This sequence belongs to the FPG family. Zn(2+) serves as cofactor.

The catalysed reaction is 2'-deoxyribonucleotide-(2'-deoxyribose 5'-phosphate)-2'-deoxyribonucleotide-DNA = a 3'-end 2'-deoxyribonucleotide-(2,3-dehydro-2,3-deoxyribose 5'-phosphate)-DNA + a 5'-end 5'-phospho-2'-deoxyribonucleoside-DNA + H(+). Its function is as follows. Involved in base excision repair of DNA damaged by oxidation or by mutagenic agents. Acts as a DNA glycosylase that recognizes and removes damaged bases. Has a preference for oxidized pyrimidines, such as thymine glycol, 5,6-dihydrouracil and 5,6-dihydrothymine. Has AP (apurinic/apyrimidinic) lyase activity and introduces nicks in the DNA strand. Cleaves the DNA backbone by beta-delta elimination to generate a single-strand break at the site of the removed base with both 3'- and 5'-phosphates. This Shigella dysenteriae serotype 1 (strain Sd197) protein is Endonuclease 8.